We begin with the raw amino-acid sequence, 87 residues long: Large ribosomal subunit protein bL27 (87 aa).

The segment at Met1–Leu21 is disordered.

This sequence belongs to the bacterial ribosomal protein bL27 family.

The chain is Large ribosomal subunit protein bL27 from Amoebophilus asiaticus (strain 5a2).